Here is a 312-residue protein sequence, read N- to C-terminus: Molybdenum cofactor biosynthesis bifunctional protein (312 aa).

The tract at residues 1–155 (MEFTHLDENG…GGKSSAAEYH (155 aa)) is molybdenum cofactor biosynthesis protein C. Residues 74–76 (LCH) and 110–111 (ME) contribute to the substrate site. Residue D125 is part of the active site. The interval 156–312 (PRTAILVMSD…FPMLKGDGHA (157 aa)) is molybdenum cofactor biosynthesis protein B.

This sequence in the N-terminal section; belongs to the MoaC family. The protein in the C-terminal section; belongs to the MoaB/Mog family.

It catalyses the reaction (8S)-3',8-cyclo-7,8-dihydroguanosine 5'-triphosphate = cyclic pyranopterin phosphate + diphosphate. The protein operates within cofactor biosynthesis; molybdopterin biosynthesis. Catalyzes the conversion of (8S)-3',8-cyclo-7,8-dihydroguanosine 5'-triphosphate to cyclic pyranopterin monophosphate (cPMP). The polypeptide is Molybdenum cofactor biosynthesis bifunctional protein (moaCB) (Chlorobaculum tepidum (strain ATCC 49652 / DSM 12025 / NBRC 103806 / TLS) (Chlorobium tepidum)).